We begin with the raw amino-acid sequence, 400 residues long: Nicotinate phosphoribosyltransferase (400 aa).

Phosphohistidine; by autocatalysis is present on H220.

Belongs to the NAPRTase family. Post-translationally, transiently phosphorylated on a His residue during the reaction cycle. Phosphorylation strongly increases the affinity for substrates and increases the rate of nicotinate D-ribonucleotide production. Dephosphorylation regenerates the low-affinity form of the enzyme, leading to product release.

It catalyses the reaction nicotinate + 5-phospho-alpha-D-ribose 1-diphosphate + ATP + H2O = nicotinate beta-D-ribonucleotide + ADP + phosphate + diphosphate. The protein operates within cofactor biosynthesis; NAD(+) biosynthesis; nicotinate D-ribonucleotide from nicotinate: step 1/1. Functionally, catalyzes the synthesis of beta-nicotinate D-ribonucleotide from nicotinate and 5-phospho-D-ribose 1-phosphate at the expense of ATP. The sequence is that of Nicotinate phosphoribosyltransferase from Salmonella dublin (strain CT_02021853).